We begin with the raw amino-acid sequence, 256 residues long: MGDGFLSIFKTKALILKTQDYKENDKLVWLFTEKIGKVCAIAKGAKKSKSKFIASTQTFCFGEYVLYRGKSLYSINEVEIIDSFQSLLSDMDTITYGSYFCELILIALEQEQSDRELFKDFIKSFYFLKNQAMDLEILARTFELKLLKATGYGFDFEKCCICGKRINKTNYLSIQYYGGVCDNCEKTGGFKISYAAYGVLKFLYKTSIENAHIISVSNEIKEEVYKVLDMFISQSYSKKPKSLEIFNYLKRSEYNE.

It belongs to the RecO family.

Functionally, involved in DNA repair and RecF pathway recombination. The sequence is that of DNA repair protein RecO from Clostridium novyi (strain NT).